The following is a 251-amino-acid chain: tRNA-uridine aminocarboxypropyltransferase 2 (251 aa).

Residues Cys-23, Cys-26, Cys-33, and Cys-35 each coordinate Zn(2+). A DXTW motif is present at residues 131-134 (DGTW).

This sequence belongs to the TDD superfamily. DTWD2 family.

The enzyme catalyses a uridine in tRNA + S-adenosyl-L-methionine = a 3-[(3S)-3-amino-3-carboxypropyl]uridine in tRNA + S-methyl-5'-thioadenosine + H(+). Its function is as follows. Catalyzes the formation of 3-(3-amino-3-carboxypropyl)uridine (acp3U) at position 20a in the D-loop of several cytoplasmic tRNAs (acp3U(20a)). The protein is tRNA-uridine aminocarboxypropyltransferase 2 of Drosophila melanogaster (Fruit fly).